Reading from the N-terminus, the 215-residue chain is Nascent polypeptide-associated complex subunit alpha (215 aa).

Residues Met1–Ser81 are disordered. Residues Val9 to Glu28 show a composition bias toward polar residues. Positions Ser29–Gly40 are enriched in acidic residues. Ser43 carries the post-translational modification Phosphoserine; by ILK1. Residues Thr44–Ala57 show a composition bias toward low complexity. Residues Gln69 to Met80 form a required for DNA-binding region. The NAC-A/B domain occupies Ser70 to Ala135. The interval Arg93 to Lys108 is RNA/DNA-binding. A Phosphoserine modification is found at Ser132. Lys142 is subject to N6-acetyllysine; alternate. Lys142 is covalently cross-linked (Glycyl lysine isopeptide (Lys-Gly) (interchain with G-Cter in SUMO2); alternate). Thr159 carries the phosphothreonine; by GSK3-beta modification. A Phosphothreonine modification is found at Thr161. Phosphoserine occurs at positions 166, 186, 191, and 203. Positions Val176 to Leu213 constitute a UBA domain.

Belongs to the NAC-alpha family. In terms of assembly, part of the nascent polypeptide-associated complex (NAC), which is a heterodimer of NACA and BTF3 (via NAC-A/B domains). NAC associates with ribosomes through the BTF3/NACB subunit and contacts the ribosomal protein L23, which is positioned near the exiting site. Both subunits can contact nascent polypeptide chains. NACA may also form homodimers, and only this form binds DNA. Interacts with TBP and JUN. Post-translationally, phosphorylation of Ser-43 by ILK during cell adhesion may promote nuclear localization. Phosphorylation of Thr-159 by GSK3B may promote proteasome mediated degradation.

It localises to the cytoplasm. The protein localises to the nucleus. In terms of biological role, prevents inappropriate targeting of non-secretory polypeptides to the endoplasmic reticulum (ER). Binds to nascent polypeptide chains as they emerge from the ribosome and blocks their interaction with the signal recognition particle (SRP), which normally targets nascent secretory peptides to the ER. Also reduces the inherent affinity of ribosomes for protein translocation sites in the ER membrane (M sites). May act as a specific coactivator for JUN, binding to DNA and stabilizing the interaction of JUN homodimers with target gene promoters. The sequence is that of Nascent polypeptide-associated complex subunit alpha from Chinchilla lanigera (Long-tailed chinchilla).